We begin with the raw amino-acid sequence, 330 residues long: Beta-ketoacyl-[acyl-carrier-protein] synthase III (330 aa).

Catalysis depends on residues Cys-115 and His-255. Residues 256-260 form an ACP-binding region; it reads QANVR. The active site involves Asn-285.

Belongs to the thiolase-like superfamily. FabH family. Homodimer.

It localises to the cytoplasm. The enzyme catalyses malonyl-[ACP] + acetyl-CoA + H(+) = 3-oxobutanoyl-[ACP] + CO2 + CoA. Its pathway is lipid metabolism; fatty acid biosynthesis. Functionally, catalyzes the condensation reaction of fatty acid synthesis by the addition to an acyl acceptor of two carbons from malonyl-ACP. Catalyzes the first condensation reaction which initiates fatty acid synthesis and may therefore play a role in governing the total rate of fatty acid production. Possesses both acetoacetyl-ACP synthase and acetyl transacylase activities. Its substrate specificity determines the biosynthesis of branched-chain and/or straight-chain of fatty acids. This Symbiobacterium thermophilum (strain DSM 24528 / JCM 14929 / IAM 14863 / T) protein is Beta-ketoacyl-[acyl-carrier-protein] synthase III.